The following is a 633-amino-acid chain: MPPLFLPSSSSALFLLLLLLLTLQTLTSISLSQPQALRSPEKCGNFSVSFPFQLSSSSSAAAFRLSCENSSTLFLHINHQSYRIIEFFTDGLLVDFPSSPSCRQFNDLRSFPFSANQFFSISFENVIGLYDCEDSSLCKFGCETNDLFGCDGREEDETSGGDIGCCYPLSDHSAWRVGDDFSVFSRYGCRGFSSWLVPRGTNRGKRGVKLEWAIPRNSPEAICDREARTVNATAIEGSVRCVCRDGFVGDGFLHGTGCLKSCFKDGKELYGDKCKIKKHNGKKLTVLAGVLAPLFILGSLLALFCLLKRPVTSHKDQQFDISTTTTTTNSVSFRKGYNKTRLFTYRELEEATKGFQDSQKLTQGKTGTIYSGNLTNGTRVIVHKVLCENQIEFMEISSQIDHLSAVLHRNLARIIGFCMDIGYNPLVVYEYPVNGSLGDRLRLGLDWCKRVNIVAEVAGLLALLQYENYPPILHTNISSGNIFLDEDFQAKVTGFGLQRKQRIDTSMYDFAVLLLEIVTGLKQREETVTQALQKIRSGKLEEIVDPSMYFHEQPVAFREQIGLVADIATRCVLFGGDGKFGMVDAARELLQIAGNNGGGGCDKKRDGIEETFSNSSLLQMISMSPDSIYLPKT.

The first 28 residues, 1–28 (MPPLFLPSSSSALFLLLLLLLTLQTLTS), serve as a signal peptide directing secretion. Residues 29–285 (ISLSQPQALR…IKKHNGKKLT (257 aa)) are Extracellular-facing. N-linked (GlcNAc...) asparagine glycans are attached at residues Asn45, Asn69, and Asn231. The helical transmembrane segment at 286 to 306 (VLAGVLAPLFILGSLLALFCL) threads the bilayer. Over 307–633 (LKRPVTSHKD…SPDSIYLPKT (327 aa)) the chain is Cytoplasmic. The 279-residue stretch at 355–633 (FQDSQKLTQG…SPDSIYLPKT (279 aa)) folds into the Protein kinase domain. Residues 361–369 (LTQGKTGTI) and Lys384 each bind ATP.

This sequence belongs to the protein kinase superfamily. Ser/Thr protein kinase family.

Its subcellular location is the membrane. The protein is Probably inactive receptor-like protein kinase At2g46850 of Arabidopsis thaliana (Mouse-ear cress).